The sequence spans 456 residues: Histidine--tRNA ligase (456 aa).

This sequence belongs to the class-II aminoacyl-tRNA synthetase family. Homodimer.

The protein resides in the cytoplasm. It carries out the reaction tRNA(His) + L-histidine + ATP = L-histidyl-tRNA(His) + AMP + diphosphate + H(+). The protein is Histidine--tRNA ligase of Borrelia garinii subsp. bavariensis (strain ATCC BAA-2496 / DSM 23469 / PBi) (Borreliella bavariensis).